The primary structure comprises 477 residues: Bifunctional protein HldE (477 aa).

A ribokinase region spans residues 1–318 (MKVTLPEFER…ENAVRGRADT (318 aa)). 195–198 (NLSE) is an ATP binding site. D264 is a catalytic residue. The segment at 344-477 (MTNGVFDILH…IKKIQKDSDK (134 aa)) is cytidylyltransferase.

This sequence in the N-terminal section; belongs to the carbohydrate kinase PfkB family. It in the C-terminal section; belongs to the cytidylyltransferase family. In terms of assembly, homodimer.

It carries out the reaction D-glycero-beta-D-manno-heptose 7-phosphate + ATP = D-glycero-beta-D-manno-heptose 1,7-bisphosphate + ADP + H(+). The enzyme catalyses D-glycero-beta-D-manno-heptose 1-phosphate + ATP + H(+) = ADP-D-glycero-beta-D-manno-heptose + diphosphate. It functions in the pathway nucleotide-sugar biosynthesis; ADP-L-glycero-beta-D-manno-heptose biosynthesis; ADP-L-glycero-beta-D-manno-heptose from D-glycero-beta-D-manno-heptose 7-phosphate: step 1/4. Its pathway is nucleotide-sugar biosynthesis; ADP-L-glycero-beta-D-manno-heptose biosynthesis; ADP-L-glycero-beta-D-manno-heptose from D-glycero-beta-D-manno-heptose 7-phosphate: step 3/4. In terms of biological role, catalyzes the phosphorylation of D-glycero-D-manno-heptose 7-phosphate at the C-1 position to selectively form D-glycero-beta-D-manno-heptose-1,7-bisphosphate. Functionally, catalyzes the ADP transfer from ATP to D-glycero-beta-D-manno-heptose 1-phosphate, yielding ADP-D-glycero-beta-D-manno-heptose. In Citrobacter koseri (strain ATCC BAA-895 / CDC 4225-83 / SGSC4696), this protein is Bifunctional protein HldE.